Reading from the N-terminus, the 469-residue chain is Chromosomal replication initiator protein DnaA (469 aa).

The domain I, interacts with DnaA modulators stretch occupies residues 1–83 (MSEWDYKIFW…KKISIDFIIK (83 aa)). The segment at 83–128 (KPNTSEDLSKAENEGGNDKKEDAAKPSSAESKKKSVKTEGGRGQHP) is domain II. The tract at residues 89 to 131 (DLSKAENEGGNDKKEDAAKPSSAESKKKSVKTEGGRGQHPDLR) is disordered. The tract at residues 129 to 344 (DLRPEYNFED…AALTKLIAYT (216 aa)) is domain III, AAA+ region. Glycine 173, glycine 175, lysine 176, and threonine 177 together coordinate ATP. The interval 345 to 469 (ELTKKTMDEA…RNTIKENTNK (125 aa)) is domain IV, binds dsDNA.

Belongs to the DnaA family. Oligomerizes as a right-handed, spiral filament on DNA at oriC.

It is found in the cytoplasm. Functionally, plays an essential role in the initiation and regulation of chromosomal replication. ATP-DnaA binds to the origin of replication (oriC) to initiate formation of the DNA replication initiation complex once per cell cycle. Binds the DnaA box (a 9 base pair repeat at the origin) and separates the double-stranded (ds)DNA. Forms a right-handed helical filament on oriC DNA; dsDNA binds to the exterior of the filament while single-stranded (ss)DNA is stabiized in the filament's interior. The ATP-DnaA-oriC complex binds and stabilizes one strand of the AT-rich DNA unwinding element (DUE), permitting loading of DNA polymerase. After initiation quickly degrades to an ADP-DnaA complex that is not apt for DNA replication. Binds acidic phospholipids. This Treponema denticola (strain ATCC 35405 / DSM 14222 / CIP 103919 / JCM 8153 / KCTC 15104) protein is Chromosomal replication initiator protein DnaA.